The primary structure comprises 110 residues: Large ribosomal subunit protein uL22 (110 aa).

The protein belongs to the universal ribosomal protein uL22 family. As to quaternary structure, part of the 50S ribosomal subunit.

Functionally, this protein binds specifically to 23S rRNA; its binding is stimulated by other ribosomal proteins, e.g. L4, L17, and L20. It is important during the early stages of 50S assembly. It makes multiple contacts with different domains of the 23S rRNA in the assembled 50S subunit and ribosome. In terms of biological role, the globular domain of the protein is located near the polypeptide exit tunnel on the outside of the subunit, while an extended beta-hairpin is found that lines the wall of the exit tunnel in the center of the 70S ribosome. In Delftia acidovorans (strain DSM 14801 / SPH-1), this protein is Large ribosomal subunit protein uL22.